Consider the following 371-residue polypeptide: Transaldolase (371 aa).

An Isoglutamyl lysine isopeptide (Lys-Gln) (interchain with Q-Cter in protein Pup) cross-link involves residue Lys-132. Residue Lys-142 is the Schiff-base intermediate with substrate of the active site.

This sequence belongs to the transaldolase family. Type 2 subfamily.

It is found in the cytoplasm. The enzyme catalyses D-sedoheptulose 7-phosphate + D-glyceraldehyde 3-phosphate = D-erythrose 4-phosphate + beta-D-fructose 6-phosphate. The protein operates within carbohydrate degradation; pentose phosphate pathway; D-glyceraldehyde 3-phosphate and beta-D-fructose 6-phosphate from D-ribose 5-phosphate and D-xylulose 5-phosphate (non-oxidative stage): step 2/3. In terms of biological role, transaldolase is important for the balance of metabolites in the pentose-phosphate pathway. In Mycolicibacterium smegmatis (strain ATCC 700084 / mc(2)155) (Mycobacterium smegmatis), this protein is Transaldolase (tal).